The following is a 1388-amino-acid chain: Rho-associated protein kinase 2 (1388 aa).

The interval 1–24 is disordered; sequence MSRPPPTGKMPGAPEAVSGDGAGA. Residues 92-354 enclose the Protein kinase domain; it reads YDVVKVIGRG…VEEIKQHPFF (263 aa). ATP-binding positions include 98-106 and K121; that span reads IGRGAFGEV. Residue D214 is the Proton acceptor of the active site. One can recognise an AGC-kinase C-terminal domain in the interval 357-425; that stretch reads DQWNWDNIRE…YRENLLLSDS (69 aa). The segment at 363–784 is interaction with PPP1R12A; the sequence is NIRETAAPVV…INELLKQKDV (422 aa). The interaction with NPM1 stretch occupies residues 373–420; the sequence is PELSSDIDSSNFDDIEDDKGDVETFPIPKAFVGNQLPFIGFTYYRENL. T414 is subject to Phosphothreonine; by ROCK2. Residues 497-573 form the REM-1 domain; that stretch reads ALRQLEREKA…LDETNALLRT (77 aa). Positions 512-530 are enriched in basic and acidic residues; sequence NAEYQRKADHEADKKRNLE. Residues 512 to 532 form a disordered region; it reads NAEYQRKADHEADKKRNLEND. Y722 is modified (phosphotyrosine; by SRC). Residues 979–1047 form the RhoBD domain; that stretch reads TSDVANLANE…LAEIMNRKEP (69 aa). Residues 979-1047 are RHOA binding; that stretch reads TSDVANLANE…LAEIMNRKEP (69 aa). Positions 1054-1126 form a coiled coil; that stretch reads TDMRRKEKEN…EQLRSQLQAL (73 aa). S1137 is modified (phosphoserine). In terms of domain architecture, PH spans 1150–1349; that stretch reads ESRLEGWLSL…WVSRLVKKIP (200 aa). Phosphothreonine is present on T1212. A Phorbol-ester/DAG-type zinc finger spans residues 1260-1315; the sequence is GHEFIPTLYHFPTNCEACMKPLWHMFKPPPALECRRCHIKCHKDHMDKKEEIIAPC. Positions 1345–1388 are disordered; sequence VKKIPKKPPAPDPFARSSPRTSMKIQQNQSIRRPSRQLAANKPS. A phosphoserine mark is found at S1362 and S1374. Residues 1362-1376 are compositionally biased toward polar residues; that stretch reads SPRTSMKIQQNQSIR.

This sequence belongs to the protein kinase superfamily. AGC Ser/Thr protein kinase family. Homodimer. Interacts with IRS1. Interacts with RAF1. Interacts with RHOA (activated by GTP), RHOB and RHOC. Interacts with PPP1R12A. Interacts with EP300. Interacts with CHORDC1. Interacts with BRCA2. Interacts with NPM1; this interaction enhances ROCK2 activity. Interacts with SORL1. Interacts with PJVK. Mg(2+) is required as a cofactor. Autophosphorylated. Phosphorylation at Tyr-722 reduces its binding to RHOA and is crucial for focal adhesion dynamics. Dephosphorylation by PTPN11 stimulates its RHOA binding activity. In terms of processing, cleaved by granzyme B during apoptosis. This leads to constitutive activation of the kinase and membrane blebbing.

It is found in the cytoplasm. The protein localises to the cell membrane. It localises to the nucleus. Its subcellular location is the cytoskeleton. The protein resides in the microtubule organizing center. It is found in the centrosome. It carries out the reaction L-seryl-[protein] + ATP = O-phospho-L-seryl-[protein] + ADP + H(+). The enzyme catalyses L-threonyl-[protein] + ATP = O-phospho-L-threonyl-[protein] + ADP + H(+). With respect to regulation, activated by RHOA binding. Inhibited by Y-27632. Its function is as follows. Protein kinase which is a key regulator of actin cytoskeleton and cell polarity. Involved in regulation of smooth muscle contraction, actin cytoskeleton organization, stress fiber and focal adhesion formation, neurite retraction, cell adhesion and motility via phosphorylation of ADD1, BRCA2, CNN1, EZR, DPYSL2, EP300, MSN, MYL9/MLC2, NPM1, RDX, PPP1R12A and VIM. Phosphorylates SORL1 and IRF4. Acts as a negative regulator of VEGF-induced angiogenic endothelial cell activation. Positively regulates the activation of p42/MAPK1-p44/MAPK3 and of p90RSK/RPS6KA1 during myogenic differentiation. Plays an important role in the timely initiation of centrosome duplication. Inhibits keratinocyte terminal differentiation. May regulate closure of the eyelids and ventral body wall through organization of actomyosin bundles. Plays a critical role in the regulation of spine and synaptic properties in the hippocampus. Plays an important role in generating the circadian rhythm of the aortic myofilament Ca(2+) sensitivity and vascular contractility by modulating the myosin light chain phosphorylation. The sequence is that of Rho-associated protein kinase 2 (ROCK2) from Sus scrofa (Pig).